The chain runs to 463 residues: MSTMAKSPEANNLHQDVIAQFPILNGYTHTVGAFSQPLNVSRLFIIDEIQTAYDELRVQIPWLAHQVVVVDAGPGKSGYITTAPWPSSAPPNDVTYEEKDDAFPSLNTLIKSGGSFLATKDLVGYPGLPEPHGLHPTPVATIRLVFITGGVLVVLSTHHNIVDGIGLMQMWDYLDILMGGGAISRQDARSANADRARVLPLIAPGEPVKDYSHLIRPNPWPLPPPPKTEWRLFKMHPWALAEIRSRARDGTDQRASARPASSDDALTAFCWQRVSAMRLASGRVTGDQVSKFGRAVNGRSAMGLDSSYLFHMMLHTETRLPIEQIARSTLAELSTQLRKDLDAARTEWSVRSYATFLAGVADKTRLLYGGITNPQTDLGGTSTMHWASRRPIRLGLLGDCHLIRKPEGMPLPGCLYFMPSGGTSGVVQLLLCLPKEELDALQEDAEWKHYTESGGRRVDGPRL.

This sequence belongs to the trichothecene 3-O-acetyltransferase family.

It participates in mycotoxin biosynthesis. Functionally, O-acetyltransferase; part of the satratoxin SC1 cluster involved in the biosynthesis of satratoxins, trichothecene mycotoxins that are associated with human food poisonings. Satratoxins are suggested to be made by products of multiple gene clusters (SC1, SC2 and SC3) that encode 21 proteins in all, including polyketide synthases, acetyltransferases, and other enzymes expected to modify the trichothecene skeleton. SC1 encodes 10 proteins, SAT1 to SAT10. The largest are SAT8, which encodes a putative polyketide synthase (PKS) with a conventional non-reducing architecture, and SAT10, a putative protein containing four ankyrin repeats and thus may be involved in protein scaffolding. The putative short-chain reductase SAT3 may assist the PKS in some capacity. SAT6 contains a secretory lipase domain and acts probably as a trichothecene esterase. SAT5 encodes a putative acetyltransferase, and so, with SAT6, may affect endogenous protection from toxicity. The probable transcription factor SAT9 may regulate the expression of the SC1 cluster. SC2 encodes proteins SAT11 to SAT16, the largest of which encodes the putative reducing PKS SAT13. SAT11 is a cytochrome P450 monooxygenase, while SAT14 and SAT16 are probable acetyltransferases. The SC2 cluster may be regulated by the transcription factor SAT15. SC3 is a small cluster that encodes 5 proteins, SAT17 to SAT21. SAT21 is a putative MFS-type transporter which may have a role in exporting secondary metabolites. The four other proteins putatively encoded in SC3 include the taurine hydroxylase-like protein SAT17, the O-methyltransferase SAT18, the acetyltransferase SAT19, and the Cys6-type zinc finger SAT20, the latter being probably involved in regulation of SC3 expression. The chain is O-acetyltransferase SAT5 from Stachybotrys chartarum (strain CBS 109288 / IBT 7711) (Toxic black mold).